The primary structure comprises 182 residues: CDP-diacylglycerol--glycerol-3-phosphate 3-phosphatidyltransferase (182 aa).

Over Q2–F12 the chain is Cytoplasmic. Residues R13–L37 form a helical membrane-spanning segment. Residues I38–T60 lie on the Periplasmic side of the membrane. Residues R61 to L81 traverse the membrane as a helical segment. The Cytoplasmic portion of the chain corresponds to V82–Y86. The chain crosses the membrane as a helical span at residues H87 to A107. The Periplasmic portion of the chain corresponds to L108–P145. The helical transmembrane segment at N146–M168 threads the bilayer. The Cytoplasmic segment spans residues L169–D181.

This sequence belongs to the CDP-alcohol phosphatidyltransferase class-I family.

The protein localises to the cell inner membrane. The enzyme catalyses a CDP-1,2-diacyl-sn-glycerol + sn-glycerol 3-phosphate = a 1,2-diacyl-sn-glycero-3-phospho-(1'-sn-glycero-3'-phosphate) + CMP + H(+). The protein operates within phospholipid metabolism; phosphatidylglycerol biosynthesis; phosphatidylglycerol from CDP-diacylglycerol: step 1/2. In terms of biological role, catalyzes the conversion of cytidine diphosphate diacylglycerol (CDP-DG) and glycerol 3-phosphate into phosphatidylglycerol. Essential for the synthesis of anionic phospholipids, thereby playing a role in balancing the ratio of zwitterionic and anionic phospholipids, which is thought to be important for normal membrane function. The chain is CDP-diacylglycerol--glycerol-3-phosphate 3-phosphatidyltransferase from Salmonella choleraesuis (strain SC-B67).